Here is a 215-residue protein sequence, read N- to C-terminus: Probable phosphoglycerate mutase GpmB (215 aa).

Substrate-binding positions include 8-15 (RHGETQWN), 21-22 (QG), Arg-58, Arg-60, 82-85 (ELNM), 104-105 (RR), and 151-152 (GI). His-9 serves as the catalytic Tele-phosphohistidine intermediate. Residue Glu-82 is the Proton donor/acceptor of the active site.

The protein belongs to the phosphoglycerate mutase family. GpmB subfamily.

The catalysed reaction is (2R)-2-phosphoglycerate = (2R)-3-phosphoglycerate. The protein operates within carbohydrate degradation; glycolysis; pyruvate from D-glyceraldehyde 3-phosphate: step 3/5. This Shigella dysenteriae serotype 1 (strain Sd197) protein is Probable phosphoglycerate mutase GpmB.